A 610-amino-acid chain; its full sequence is Solute carrier family 23 member 3 (610 aa).

The segment covering 1-16 (MSRSPLNPSQLRSVGS) has biased composition (polar residues). The interval 1–32 (MSRSPLNPSQLRSVGSQDALAPLPPPAPQNPS) is disordered. Residues 1–49 (MSRSPLNPSQLRSVGSQDALAPLPPPAPQNPSTHSWDPLCGSLPWGLSC) are Cytoplasmic-facing. Residues 50 to 70 (LLALQHVLVMASLLCVSHLLL) traverse the membrane as a helical segment. Over 71 to 85 (LCSLSPGGLSYSPSQ) the chain is Extracellular. Residues 86 to 106 (LLASSFFSCGMSTILQTWMGS) traverse the membrane as a helical segment. Over 107–164 (RLPLVQAPSLEFLIPALVLTSQKLPRAIQTPGNSSLMLHLCRGPSCHGLGHWNTSLQE) the chain is Cytoplasmic. The helical transmembrane segment at 165-185 (VSGAVVVSGLLQGMMGLLGSP) threads the bilayer. The Extracellular segment spans residues 186–187 (GH). A helical membrane pass occupies residues 188-208 (VFPHCGPLVLAPSLVVAGLSA). At 209 to 211 (HRE) the chain is on the cytoplasmic side. Residues 212 to 232 (VAQFCFTHWGLALLVILLMVV) form a helical membrane-spanning segment. At 233–266 (CSQHLGSCQFHVCPWRRASTSSTHTPLPVFRLLS) the chain is on the extracellular side. The chain crosses the membrane as a helical span at residues 267-287 (VLIPVACVWIVSAFVGFSVIP). The Cytoplasmic segment spans residues 288–316 (QELSAPTKAPWIWLPHPGEWNWPLLTPRA). The helical transmembrane segment at 317–337 (LAAGISMALAASTSSLGCYAL) threads the bilayer. Residues 338 to 355 (CGRLLHLPPPPPHACSRG) lie on the Extracellular side of the membrane. A helical membrane pass occupies residues 356–376 (LSLEGLGSVLAGLLGSPMGTA). Over 377–394 (SSFPNVGKVGLIQAGSQQ) the chain is Cytoplasmic. The helical transmembrane segment at 395 to 414 (VAHLVGLLCVGLGLSPRLAQ) threads the bilayer. Over 415 to 423 (LLTTIPLPV) the chain is Extracellular. A helical membrane pass occupies residues 424-446 (VGGVLGVTQAVVLSAGFSSFYLA). The Cytoplasmic segment spans residues 447–452 (DIDSGR). Residues 453 to 472 (NIFIVGFSIFMALLLPRWFR) form a helical membrane-spanning segment. Residues 473–486 (EAPVLFSTGWSPLD) are Extracellular-facing. Residues 487 to 507 (VLLHSLLTQPIFLAGLSGFLL) traverse the membrane as a helical segment. Over 508–610 (ENTIPGTQLE…SSREGFRSQK (103 aa)) the chain is Cytoplasmic. A disordered region spans residues 571–610 (PEDPGDEEGGSSEPEEMADLLPGSGEPCPESSREGFRSQK). Over residues 573 to 588 (DPGDEEGGSSEPEEMA) the composition is skewed to acidic residues. The segment covering 601–610 (SSREGFRSQK) has biased composition (basic and acidic residues).

It belongs to the nucleobase:cation symporter-2 (NCS2) (TC 2.A.40) family.

The protein resides in the membrane. The enzyme catalyses hypoxanthine(out) + Na(+)(out) = hypoxanthine(in) + Na(+)(in). Functionally, acts as a sodium-dependent hypoxanthine transporter. May show xanthine-hypoxanthine exchange activity. This chain is Solute carrier family 23 member 3 (SLC23A3), found in Homo sapiens (Human).